Reading from the N-terminus, the 1083-residue chain is DNA-directed RNA polymerase subunit beta (1083 aa).

It belongs to the RNA polymerase beta chain family. In plastids the minimal PEP RNA polymerase catalytic core is composed of four subunits: alpha, beta, beta', and beta''. When a (nuclear-encoded) sigma factor is associated with the core the holoenzyme is formed, which can initiate transcription.

Its subcellular location is the plastid. It is found in the chloroplast. It catalyses the reaction RNA(n) + a ribonucleoside 5'-triphosphate = RNA(n+1) + diphosphate. Its function is as follows. DNA-dependent RNA polymerase catalyzes the transcription of DNA into RNA using the four ribonucleoside triphosphates as substrates. This Acorus calamus var. americanus (American sweet flag) protein is DNA-directed RNA polymerase subunit beta.